Reading from the N-terminus, the 152-residue chain is Transcriptional regulator MraZ (152 aa).

SpoVT-AbrB domains are found at residues Ile7 to Glu54 and Ala83 to Ala126.

Belongs to the MraZ family. As to quaternary structure, forms oligomers.

It is found in the cytoplasm. Its subcellular location is the nucleoid. This is Transcriptional regulator MraZ from Hydrogenovibrio crunogenus (strain DSM 25203 / XCL-2) (Thiomicrospira crunogena).